We begin with the raw amino-acid sequence, 493 residues long: Glutamate--tRNA ligase (493 aa).

The 'HIGH' region motif lies at 10–20 (PSPTGDPHVGT). The short motif at 251 to 255 (KLSKR) is the 'KMSKS' region element. ATP is bound at residue Lys-254.

It belongs to the class-I aminoacyl-tRNA synthetase family. Glutamate--tRNA ligase type 1 subfamily. In terms of assembly, monomer.

It localises to the cytoplasm. The catalysed reaction is tRNA(Glu) + L-glutamate + ATP = L-glutamyl-tRNA(Glu) + AMP + diphosphate. Its function is as follows. Catalyzes the attachment of glutamate to tRNA(Glu) in a two-step reaction: glutamate is first activated by ATP to form Glu-AMP and then transferred to the acceptor end of tRNA(Glu). The chain is Glutamate--tRNA ligase from Pseudomonas putida (strain W619).